Here is a 203-residue protein sequence, read N- to C-terminus: MSDFIVGLTGGIASGKSALAAEFEKLGIPVIDADVVARQVVEPGPILDAIAHRFGRAILLPDGMLDRQALRQIVFADPVQRKALEAITHPAIRAELRRAALAARGPYAIVAIPLLAEAGGRATYPWLDRILVVDIPAALQHARLMRRDGATPELANRMIAAQATRDQREAIADDIVSNDRTPEQLEQEARRLDVVYRVAASEH.

Residues 5–203 form the DPCK domain; that stretch reads IVGLTGGIAS…VVYRVAASEH (199 aa). 13 to 18 provides a ligand contact to ATP; the sequence is ASGKSA.

It belongs to the CoaE family.

It is found in the cytoplasm. It carries out the reaction 3'-dephospho-CoA + ATP = ADP + CoA + H(+). The protein operates within cofactor biosynthesis; coenzyme A biosynthesis; CoA from (R)-pantothenate: step 5/5. In terms of biological role, catalyzes the phosphorylation of the 3'-hydroxyl group of dephosphocoenzyme A to form coenzyme A. The protein is Dephospho-CoA kinase of Xanthomonas euvesicatoria pv. vesicatoria (strain 85-10) (Xanthomonas campestris pv. vesicatoria).